Reading from the N-terminus, the 382-residue chain is Anhydro-N-acetylmuramic acid kinase (382 aa).

Residue 22–29 (GTSMDGVD) coordinates ATP.

The protein belongs to the anhydro-N-acetylmuramic acid kinase family.

The enzyme catalyses 1,6-anhydro-N-acetyl-beta-muramate + ATP + H2O = N-acetyl-D-muramate 6-phosphate + ADP + H(+). The protein operates within amino-sugar metabolism; 1,6-anhydro-N-acetylmuramate degradation. Its pathway is cell wall biogenesis; peptidoglycan recycling. In terms of biological role, catalyzes the specific phosphorylation of 1,6-anhydro-N-acetylmuramic acid (anhMurNAc) with the simultaneous cleavage of the 1,6-anhydro ring, generating MurNAc-6-P. Is required for the utilization of anhMurNAc either imported from the medium or derived from its own cell wall murein, and thus plays a role in cell wall recycling. In Burkholderia orbicola (strain MC0-3), this protein is Anhydro-N-acetylmuramic acid kinase.